A 187-amino-acid chain; its full sequence is tRNA (cytidine(56)-2'-O)-methyltransferase (187 aa).

S-adenosyl-L-methionine-binding positions include Leu-94 and 120–124 (GAEKV).

Belongs to the aTrm56 family. Homodimer.

It is found in the cytoplasm. The enzyme catalyses cytidine(56) in tRNA + S-adenosyl-L-methionine = 2'-O-methylcytidine(56) in tRNA + S-adenosyl-L-homocysteine + H(+). Its function is as follows. Specifically catalyzes the AdoMet-dependent 2'-O-ribose methylation of cytidine at position 56 in tRNAs. The polypeptide is tRNA (cytidine(56)-2'-O)-methyltransferase (Hyperthermus butylicus (strain DSM 5456 / JCM 9403 / PLM1-5)).